A 747-amino-acid chain; its full sequence is Polyribonucleotide nucleotidyltransferase (747 aa).

Aspartate 487 and aspartate 493 together coordinate Mg(2+). In terms of domain architecture, KH spans 554-613; it reads PSTTTIKIDKDKIRDVIGPGGKVIKEICETSDAKIDISDDGTVSVYASDRDKLKVALDKI. One can recognise an S1 motif domain in the interval 623-691; it reads GEIFNGTVMK…NKGKAKLTIK (69 aa). Residues 691-747 form a disordered region; that stretch reads KNADKDKSSNNPKQKNNVNNSKENSEPERRDSSKKRAWNEDNNSDTTEVITERKYFN. Low complexity predominate over residues 699-712; it reads SNNPKQKNNVNNSK. Positions 730 to 739 are enriched in polar residues; it reads EDNNSDTTEV.

It belongs to the polyribonucleotide nucleotidyltransferase family. It depends on Mg(2+) as a cofactor.

It is found in the cytoplasm. It catalyses the reaction RNA(n+1) + phosphate = RNA(n) + a ribonucleoside 5'-diphosphate. Functionally, involved in mRNA degradation. Catalyzes the phosphorolysis of single-stranded polyribonucleotides processively in the 3'- to 5'-direction. In Rickettsia akari (strain Hartford), this protein is Polyribonucleotide nucleotidyltransferase.